The sequence spans 415 residues: JmjC domain-containing protein C (415 aa).

Residues N97–K140 form a disordered region. Residues N104–N137 show a composition bias toward low complexity. In terms of domain architecture, JmjC spans N127 to C302.

This Dictyostelium discoideum (Social amoeba) protein is JmjC domain-containing protein C (jcdC).